The primary structure comprises 202 residues: ATP-dependent Clp protease proteolytic subunit (202 aa).

Residue S101 is the Nucleophile of the active site. H126 is an active-site residue.

The protein belongs to the peptidase S14 family. Component of the chloroplastic Clp protease core complex.

It is found in the plastid. The protein resides in the chloroplast stroma. It carries out the reaction Hydrolysis of proteins to small peptides in the presence of ATP and magnesium. alpha-casein is the usual test substrate. In the absence of ATP, only oligopeptides shorter than five residues are hydrolyzed (such as succinyl-Leu-Tyr-|-NHMec, and Leu-Tyr-Leu-|-Tyr-Trp, in which cleavage of the -Tyr-|-Leu- and -Tyr-|-Trp bonds also occurs).. Functionally, cleaves peptides in various proteins in a process that requires ATP hydrolysis. Has a chymotrypsin-like activity. Plays a major role in the degradation of misfolded proteins. In Liriodendron tulipifera (Tuliptree), this protein is ATP-dependent Clp protease proteolytic subunit.